Here is a 112-residue protein sequence, read N- to C-terminus: MPEIPEGDYESGKKVFKQRCLQCHVVDSKATKTGPTLHGIIGRKSGAVPGFDYSTANKNKGVVWTRETLFEYLLNPKKYIPGTKMVFAGLKKADERADLIKYIEEECKKPIS.

Heme c contacts are provided by cysteine 20, cysteine 23, histidine 24, and methionine 85.

In terms of processing, binds 1 heme c group covalently per subunit.

It is found in the mitochondrion intermembrane space. Electron carrier between complex III (ubiquinol-cytochrome c oxireductase) and complex IV (cytochrome c oxidase). This Ascaris suum (Pig roundworm) protein is Cytochrome c type-1.